The chain runs to 354 residues: 3-isopropylmalate dehydrogenase (354 aa).

76–87 (GPRWDGAKERPE) provides a ligand contact to NAD(+). Positions 94, 104, 130, and 215 each coordinate substrate. Mg(2+) contacts are provided by Asp-215, Asp-239, and Asp-243. 273 to 285 (GSAPDIAGKNKAN) provides a ligand contact to NAD(+).

This sequence belongs to the isocitrate and isopropylmalate dehydrogenases family. LeuB type 1 subfamily. As to quaternary structure, homodimer. Mg(2+) is required as a cofactor. It depends on Mn(2+) as a cofactor.

Its subcellular location is the cytoplasm. The catalysed reaction is (2R,3S)-3-isopropylmalate + NAD(+) = 4-methyl-2-oxopentanoate + CO2 + NADH. It participates in amino-acid biosynthesis; L-leucine biosynthesis; L-leucine from 3-methyl-2-oxobutanoate: step 3/4. Its function is as follows. Catalyzes the oxidation of 3-carboxy-2-hydroxy-4-methylpentanoate (3-isopropylmalate) to 3-carboxy-4-methyl-2-oxopentanoate. The product decarboxylates to 4-methyl-2 oxopentanoate. This is 3-isopropylmalate dehydrogenase from Bacillus cereus (strain ZK / E33L).